We begin with the raw amino-acid sequence, 192 residues long: Transcription antitermination protein NusB (192 aa).

This sequence belongs to the NusB family.

Functionally, involved in transcription antitermination. Required for transcription of ribosomal RNA (rRNA) genes. Binds specifically to the boxA antiterminator sequence of the ribosomal RNA (rrn) operons. In Lactococcus lactis subsp. lactis (strain IL1403) (Streptococcus lactis), this protein is Transcription antitermination protein NusB.